Reading from the N-terminus, the 252-residue chain is Low-density lipoprotein receptor-related protein 5-like protein (252 aa).

LDL-receptor class B repeat units follow at residues glycine 3–alanine 45, arginine 46–methionine 88, glycine 89–glutamate 132, glycine 133–phenylalanine 175, and isoleucine 176–valine 218. The interval histidine 223–serine 247 is disordered.

In Homo sapiens (Human), this protein is Low-density lipoprotein receptor-related protein 5-like protein (LRP5L).